The sequence spans 120 residues: NAD(P)H-quinone oxidoreductase subunit 3, chloroplastic (120 aa).

The next 3 helical transmembrane spans lie at 9–29 (IFWAFLIISSVIPILAFXISG), 64–84 (MFALVFVVFDVETVFLYPWAM), and 88–108 (VLGVSVFIEALIFVLILIVGL).

This sequence belongs to the complex I subunit 3 family. As to quaternary structure, NDH is composed of at least 16 different subunits, 5 of which are encoded in the nucleus.

Its subcellular location is the plastid. It localises to the chloroplast thylakoid membrane. It catalyses the reaction a plastoquinone + NADH + (n+1) H(+)(in) = a plastoquinol + NAD(+) + n H(+)(out). It carries out the reaction a plastoquinone + NADPH + (n+1) H(+)(in) = a plastoquinol + NADP(+) + n H(+)(out). In terms of biological role, NDH shuttles electrons from NAD(P)H:plastoquinone, via FMN and iron-sulfur (Fe-S) centers, to quinones in the photosynthetic chain and possibly in a chloroplast respiratory chain. The immediate electron acceptor for the enzyme in this species is believed to be plastoquinone. Couples the redox reaction to proton translocation, and thus conserves the redox energy in a proton gradient. This is NAD(P)H-quinone oxidoreductase subunit 3, chloroplastic from Eucalyptus globulus subsp. globulus (Tasmanian blue gum).